We begin with the raw amino-acid sequence, 853 residues long: Leucine--tRNA ligase (853 aa).

A 'HIGH' region motif is present at residues 40–50; sequence PYPSGKMHMGH. Residues 609-613 carry the 'KMSKS' region motif; the sequence is KMSKS. Lys612 is a binding site for ATP.

This sequence belongs to the class-I aminoacyl-tRNA synthetase family.

It is found in the cytoplasm. The catalysed reaction is tRNA(Leu) + L-leucine + ATP = L-leucyl-tRNA(Leu) + AMP + diphosphate. This chain is Leucine--tRNA ligase, found in Brachyspira hyodysenteriae (strain ATCC 49526 / WA1).